A 305-amino-acid chain; its full sequence is Homoserine O-acetyltransferase (305 aa).

The active-site Acyl-thioester intermediate is Cys142. Substrate is bound by residues Lys163 and Ser192. Residue His235 is the Proton acceptor of the active site. Residue Glu237 is part of the active site. Residue Arg249 participates in substrate binding.

The protein belongs to the MetA family.

The protein localises to the cytoplasm. It carries out the reaction L-homoserine + acetyl-CoA = O-acetyl-L-homoserine + CoA. It participates in amino-acid biosynthesis; L-methionine biosynthesis via de novo pathway; O-acetyl-L-homoserine from L-homoserine: step 1/1. Transfers an acetyl group from acetyl-CoA to L-homoserine, forming acetyl-L-homoserine. The polypeptide is Homoserine O-acetyltransferase (Acetivibrio thermocellus (strain ATCC 27405 / DSM 1237 / JCM 9322 / NBRC 103400 / NCIMB 10682 / NRRL B-4536 / VPI 7372) (Clostridium thermocellum)).